The sequence spans 1165 residues: Integrin alpha-L (1165 aa).

The signal sequence occupies residues 1 to 23 (MNSCIIVLRLLLSGPFVFAPAWS). Residues 24–1084 (YNLDVRHVQN…MKVDLVYEKE (1061 aa)) are Extracellular-facing. 2 FG-GAP repeats span residues 29 to 80 (RHVQ…DCLP) and 81 to 138 (VTLS…GPVL). N-linked (GlcNAc...) asparagine glycosylation is present at N33. Cysteines 71 and 78 form a disulfide. Residue N86 is glycosylated (N-linked (GlcNAc...) asparagine). A disulfide bond links C108 and C126. The 172-residue stretch at 153-324 (DLVFLFDGSM…EKLKDLFTEL (172 aa)) folds into the VWFA domain. N185 is a glycosylation site (N-linked (GlcNAc...) asparagine). FG-GAP repeat units follow at residues 335 to 386 (SKQD…SSTF), 387 to 442 (VGNE…GGPW), 443 to 503 (SQIQ…EFQM), 504 to 560 (VSEL…GLSP), and 564 to 624 (QRIE…FSPA). Positions 465, 467, 469, 473, 527, 529, 531, 535, 587, 591, and 595 each coordinate Ca(2+). 3 N-linked (GlcNAc...) asparagine glycosylation sites follow: N646, N667, and N723. Residues C650 and C704 are joined by a disulfide bond. 2 cysteine pairs are disulfide-bonded: C768/C774 and C842/C858. N-linked (GlcNAc...) asparagine glycosylation is found at N859, N894, and N929. 2 disulfide bridges follow: C994–C1009 and C1017–C1048. Residues N1056 and N1067 are each glycosylated (N-linked (GlcNAc...) asparagine). A helical transmembrane segment spans residues 1085-1105 (MLYLYVLSGIGGLLLLFLIFI). At 1106-1165 (ALYKVGFFKRNLKEKMEANVDASSEIPGEDAGQPELEKECKDPGCLEPLQKTDEDGSGGD) the chain is on the cytoplasmic side. Residues 1111 to 1115 (GFFKR) carry the GFFKR motif motif. Residues 1123–1165 (ANVDASSEIPGEDAGQPELEKECKDPGCLEPLQKTDEDGSGGD) are disordered. The span at 1140–1159 (ELEKECKDPGCLEPLQKTDE) shows a compositional bias: basic and acidic residues.

This sequence belongs to the integrin alpha chain family. Heterodimer of an alpha and a beta subunit. The ITGAL alpha subunit associates with the ITGB2 beta subunit. Interacts with THBD. Interacts with CD226. In resting T-cells, up to 40% of surface ITGAL is constitutively phosphorylated. Phosphorylation causes conformational changes needed for ligand binding and is necessary for the activation by some physiological agents.

It is found in the cell membrane. In terms of biological role, integrin ITGAL/ITGB2 is a receptor for ICAM1, ICAM2, ICAM3 and ICAM4. Integrin ITGAL/ITGB2 is a receptor for F11R. Integrin ITGAL/ITGB2 is a receptor for the secreted form of ubiquitin-like protein ISG15; the interaction is mediated by ITGAL. Involved in a variety of immune phenomena including leukocyte-endothelial cell interaction, cytotoxic T-cell mediated killing, and antibody dependent killing by granulocytes and monocytes. Contributes to natural killer cell cytotoxicity. Involved in leukocyte adhesion and transmigration of leukocytes including T-cells and neutrophils. Acts as a platform at the immunological synapse to translate TCR engagement and density of the ITGAL ligand ICAM1 into graded adhesion. Required for generation of common lymphoid progenitor cells in bone marrow, indicating the role in lymphopoiesis. Integrin ITGAL/ITGB2 in association with ICAM3, contributes to apoptotic neutrophil phagocytosis by macrophages. The chain is Integrin alpha-L from Bos taurus (Bovine).